The chain runs to 902 residues: Protein NrfI (902 aa).

10 helical membrane-spanning segments follow: residues 9–29, 75–95, 300–320, 335–355, 602–622, 659–679, 731–751, 772–792, 832–852, and 868–888; these read YITL…ATFI, FLFH…RYLG, VTYL…LDPT, LSLL…YAQS, LVLG…PPLA, DTYE…LLFF, SYGF…LFIL, VSLI…GIWA, YLFS…YFGV, and LPIP…SLIA.

The protein in the C-terminal section; belongs to the CcmF/CycK/Ccl1/NrfE/CcsA family.

The protein localises to the cell membrane. Its function is as follows. May play a role in cytochrome c biogenesis and may be required for maturation of the NrfA protein. The sequence is that of Protein NrfI (nrfI) from Wolinella succinogenes (strain ATCC 29543 / DSM 1740 / CCUG 13145 / JCM 31913 / LMG 7466 / NCTC 11488 / FDC 602W) (Vibrio succinogenes).